Here is an 809-residue protein sequence, read N- to C-terminus: Poly(A) polymerase (809 aa).

The tract at residues 1–50 (MNKNGGPPVANITTSSTTITSTTTTQAKSQLPSSLSVNNLHTTQGSTDQP) is disordered. Low complexity predominate over residues 12-25 (ITTSSTTITSTTTT). Positions 26-50 (QAKSQLPSSLSVNNLHTTQGSTDQP) are enriched in polar residues. Residues 133-135 (FGS), 146-148 (DID), D200, K262, Y271, and 280-281 (GV) each bind ATP. Residues D146, D148, and D200 each coordinate Mg(2+). Disordered regions lie at residues 529–760 (FVKD…QQIQ) and 785–809 (ISSS…IRGN). Over residues 530–540 (VKDEGPEEPVK) the composition is skewed to basic and acidic residues. Over residues 572-655 (SPITTNINST…TPPTTTTINS (84 aa)) the composition is skewed to low complexity. Residues 656–665 (VQPPSAQPTE) show a composition bias toward polar residues. A compositionally biased stretch (low complexity) spans 666–706 (NGSSTSNSPTSTSINNTALPPNPTTNSESTIETTITLPTTL). Residues 707 to 735 (ESQTSTLKDSNEISTNGTAVATEPTITSP) are compositionally biased toward polar residues. 2 stretches are compositionally biased toward low complexity: residues 736 to 760 (SVNI…QQIQ) and 785 to 794 (ISSSSETSQS).

It belongs to the poly(A) polymerase family. Requires Mg(2+) as cofactor. The cofactor is Mn(2+).

Its subcellular location is the nucleus. The enzyme catalyses RNA(n) + ATP = RNA(n)-3'-adenine ribonucleotide + diphosphate. In terms of biological role, polymerase that creates the 3'-poly(A) tail of mRNA's. May acquire specificity through interaction with a cleavage and polyadenylation factor. In Dictyostelium discoideum (Social amoeba), this protein is Poly(A) polymerase (papA).